Here is a 120-residue protein sequence, read N- to C-terminus: Protein BEX4 (120 aa).

The segment at 1-54 (MESKEELAANNLNGENAQQENEGGEQAPTQNEEESRHLGGGEGQKPGGNIRRGR) is disordered. Low complexity predominate over residues 8 to 27 (AANNLNGENAQQENEGGEQA). The interaction with SIRT2 stretch occupies residues 31–90 (NEEESRHLGGGEGQKPGGNIRRGRVRRLVPNFRWAIPNRHIEHNEARDDVERFVGQMMEI). The interval 31-120 (NEEESRHLGG…DNHYDFCLIP (90 aa)) is interaction with alpha-tubulin. A Zn(2+)-binding site is contributed by cysteine 117.

It belongs to the BEX family. As to quaternary structure, interacts with alpha-tubulin. Interacts with SIRT2. In terms of processing, ubiquitinated and degraded by the proteasome. In terms of tissue distribution, very high expression in heart, skeletal muscle, liver, and kidney. The levels of expression are uniform throughout the brain.

Its subcellular location is the cytoplasm. It is found in the cytoskeleton. It localises to the spindle pole. The protein resides in the nucleus. Its function is as follows. May play a role in microtubule deacetylation by negatively regulating the SIRT2 deacetylase activity toward alpha-tubulin and thereby participate in the control of cell cycle progression and genomic stability. In absence of reductive stress, acts as a pseudosubstrate for the CRL2(FEM1B) complex: associates with FEM1B via zinc, thereby preventing association between FEM1B and its substrates. The polypeptide is Protein BEX4 (Homo sapiens (Human)).